The chain runs to 518 residues: Arrestin-related trafficking adapter 10 (518 aa).

Residue K118 forms a Glycyl lysine isopeptide (Lys-Gly) (interchain with G-Cter in ubiquitin) linkage.

This sequence belongs to the ART10 family. In terms of assembly, interacts with RSP5. Post-translationally, ubiquitinated by RSP5.

Its subcellular location is the cytoplasm. Its function is as follows. May regulate endocytosis by recruiting RSP5 ubiquitin ligase activity to specific plasma membrane proteins in response to extracellular stimuli. The polypeptide is Arrestin-related trafficking adapter 10 (ART10) (Saccharomyces cerevisiae (strain Lalvin EC1118 / Prise de mousse) (Baker's yeast)).